The sequence spans 492 residues: Amphoterin-induced protein 1 (492 aa).

Positions 1–27 (MQPQRDLRGLWLLLLSVFLLLFEVARA) are cleaved as a signal peptide. The LRRNT domain maps to 28–61 (GRSVVSCPANCLCASNILSCSKQQLPNVPQSLPS). Topologically, residues 28-371 (GRSVVSCPAN…LHGHHDTLNT (344 aa)) are extracellular. 2 disulfide bridges follow: Cys34-Cys40 and Cys38-Cys47. 6 LRR repeats span residues 62–83 (YTAL…WTPT), 87–108 (NLHS…AFVP), 111–132 (NLRY…LFSD), 135–156 (ALEV…AFED), 159–180 (QLQK…LIKD), and 186–206 (KLML…TDLQ). Asn72 is a glycosylation site (N-linked (GlcNAc...) asparagine). The LRRCT domain occupies 208 to 272 (LPAWVKNGLY…FSLDFFNCSE (65 aa)). 3 cysteine pairs are disulfide-bonded: Cys225–Cys253, Cys227–Cys270, and Cys290–Cys340. N-linked (GlcNAc...) asparagine glycosylation is found at Asn269, Asn315, Asn348, and Asn359. The Ig-like C2-type domain occupies 269–352 (NCSEYKESAW…MGETFNETLS (84 aa)). The chain crosses the membrane as a helical span at residues 372 to 392 (AYTTLVGCILSVVLVLIYLYL). The Cytoplasmic portion of the chain corresponds to 393–492 (TPCRCWCRGV…SVFSDTPIVV (100 aa)). The disordered stretch occupies residues 404–492 (KPSSHQGDSL…SVFSDTPIVV (89 aa)). Residues 407–423 (SHQGDSLSSSMLSTTPN) show a composition bias toward polar residues. Basic and acidic residues predominate over residues 430-441 (GDKDDGFDRRVA). Phosphoserine occurs at positions 476 and 480.

Belongs to the immunoglobulin superfamily. AMIGO family. In terms of assembly, homodimer, and heterodimer with AMIGO2 and AMIGO3. Interacts with KCNB1. Expressed in hippocampal and cortical neurons (at protein level). High levels in cerebellum, cerebrum, and retina. Low levels in liver, kidney, small intestine, spleen, lung and heart.

Its subcellular location is the cell membrane. The protein resides in the perikaryon. The protein localises to the cell projection. It is found in the dendrite. In terms of biological role, promotes growth and fasciculation of neurites from cultured hippocampal neurons. May be involved in fasciculation as well as myelination of developing neural axons. May have a role in regeneration as well as neural plasticity in the adult nervous system. May mediate homophilic as well as heterophilic cell-cell interaction and contribute to signal transduction through its intracellular domain. Assembled with KCNB1 modulates the gating characteristics of the delayed rectifier voltage-dependent potassium channel KCNB1. This is Amphoterin-induced protein 1 from Mus musculus (Mouse).